The sequence spans 337 residues: MSSSPVKRQRMESALDQLKQFTTVVADTGDFHAIDEYKPQDATTNPSLILAAAQMPAYQELVEEAIAYGRKLGGSQEDQIKNAIDKLFVLFGAEILKKIPGRVSTEVDARLSFDKDAMVARARRLIELYKEAGISKDRILIKLSSTWEGIQAGKELEEQHGIHCNMTLLFSFAQAVACAEAGVTLISPFVGRILDWHVANTDKKSYEPLEDPGVKSVTKIYNYYKKFSYKTIVMGASFRNTGEIKALAGCDFLTISPKLLGELLQDNAKLVPVLSAKAAQASDLEKIHLDEKSFRWLHNEDQMAVEKLSDGIRKFAADAVKLERMLTERMFNAENGK.

A Nuclear localization signal motif is present at residues M1–R10. An N6-acetyllysine modification is found at K115. The Schiff-base intermediate with substrate role is filled by K142. N6-acetyllysine is present on K219. A phosphoserine mark is found at S237 and S256. N6-acetyllysine occurs at positions 269, 286, and 321.

The protein belongs to the transaldolase family. Type 1 subfamily. As to quaternary structure, homodimer. Heterodimer with isoform 2. Interacts with KPNA1 and KPNA4.

The protein localises to the nucleus. The protein resides in the cytoplasm. It catalyses the reaction D-sedoheptulose 7-phosphate + D-glyceraldehyde 3-phosphate = D-erythrose 4-phosphate + beta-D-fructose 6-phosphate. It participates in carbohydrate degradation; pentose phosphate pathway; D-glyceraldehyde 3-phosphate and beta-D-fructose 6-phosphate from D-ribose 5-phosphate and D-xylulose 5-phosphate (non-oxidative stage): step 2/3. Catalyzes the rate-limiting step of the non-oxidative phase in the pentose phosphate pathway. Catalyzes the reversible conversion of sedheptulose-7-phosphate and D-glyceraldehyde 3-phosphate into erythrose-4-phosphate and beta-D-fructose 6-phosphate. Not only acts as a pentose phosphate pathway enzyme, but also affects other metabolite pathways by altering its subcellular localization between the nucleus and the cytoplasm. This Homo sapiens (Human) protein is Transaldolase.